The chain runs to 406 residues: [Pyruvate dehydrogenase (acetyl-transferring)] kinase isozyme 3, mitochondrial (406 aa).

In terms of domain architecture, Histidine kinase spans 131 to 362; that stretch reads IEYKEKFGFD…DAVIYLKALS (232 aa). 247 to 254 lines the ATP pocket; it reads ELFKNSMR. Lys278 is modified (N6-succinyllysine). ATP is bound by residues Asp287, 306–307, and 323–328; these read ST and GFGYGL. The interval 383 to 406 is disordered; the sequence is TPEADDWSNPSSEPRDASKYKAKQ. A compositionally biased stretch (basic and acidic residues) spans 395-406; that stretch reads EPRDASKYKAKQ.

The protein belongs to the PDK/BCKDK protein kinase family. In terms of assembly, homodimer. Interacts with the pyruvate dehydrogenase complex subunit DLAT, and is part of the multimeric pyruvate dehydrogenase complex that contains multiple copies of pyruvate dehydrogenase (E1), dihydrolipoamide acetyltransferase (DLAT, E2) and lipoamide dehydrogenase (DLD, E3). Expressed in heart, skeletal muscle, spinal cord, as well as fetal and adult brain.

It localises to the mitochondrion matrix. The catalysed reaction is L-seryl-[pyruvate dehydrogenase E1 alpha subunit] + ATP = O-phospho-L-seryl-[pyruvate dehydrogenase E1 alpha subunit] + ADP + H(+). With respect to regulation, activated by interaction with DLAT. Inhibited by AZD7545, dichloroacetate and radicicol. Functionally, inhibits pyruvate dehydrogenase activity by phosphorylation of the E1 subunit PDHA1, and thereby regulates glucose metabolism and aerobic respiration. Can also phosphorylate PDHA2. Decreases glucose utilization and increases fat metabolism in response to prolonged fasting, and as adaptation to a high-fat diet. Plays a role in glucose homeostasis and in maintaining normal blood glucose levels in function of nutrient levels and under starvation. Plays a role in the generation of reactive oxygen species. In Homo sapiens (Human), this protein is [Pyruvate dehydrogenase (acetyl-transferring)] kinase isozyme 3, mitochondrial (PDK3).